The following is a 512-amino-acid chain: D-alanine--D-alanyl carrier protein ligase (512 aa).

152 to 153 (TS) lines the ATP pocket. Asp-199 is a D-alanine binding site. 294–299 (NAYGPT) lines the ATP pocket. Residue Val-303 participates in D-alanine binding. ATP contacts are provided by residues Asp-385, 397 to 400 (YGGR), and Lys-499. Lys-499 contacts D-alanine.

The protein belongs to the ATP-dependent AMP-binding enzyme family. DltA subfamily.

It is found in the cytoplasm. It carries out the reaction holo-[D-alanyl-carrier protein] + D-alanine + ATP = D-alanyl-[D-alanyl-carrier protein] + AMP + diphosphate. It functions in the pathway cell wall biogenesis; lipoteichoic acid biosynthesis. In terms of biological role, catalyzes the first step in the D-alanylation of lipoteichoic acid (LTA), the activation of D-alanine and its transfer onto the D-alanyl carrier protein (Dcp) DltC. In an ATP-dependent two-step reaction, forms a high energy D-alanyl-AMP intermediate, followed by transfer of the D-alanyl residue as a thiol ester to the phosphopantheinyl prosthetic group of the Dcp. D-alanylation of LTA plays an important role in modulating the properties of the cell wall in Gram-positive bacteria, influencing the net charge of the cell wall. This chain is D-alanine--D-alanyl carrier protein ligase, found in Streptococcus pyogenes serotype M28 (strain MGAS6180).